We begin with the raw amino-acid sequence, 818 residues long: H(+)/Cl(-) exchange transporter 3 (818 aa).

Over 1 to 125 the chain is Cytoplasmic; the sequence is MESEQLFHRG…WEMTKSLYDA (125 aa). Short sequence motifs (di-leucine internalization motif; mediates targeting to late endosome and lysosome membranes) lie at residues 28–29, 46–47, and 71–75; these read LL and LLDLL. The helical transmembrane segment at 126-163 threads the bilayer; the sequence is WSGWLVVTLTGLASGALAGLIDIAADWMTDLKEGICLS. Asparagine 177 is a glycosylation site (N-linked (GlcNAc...) asparagine). A helical transmembrane segment spans residues 209–232; that stretch reads MNYIMYIFWALSFAFLAVSLVKVF. The Selectivity filter part_1 motif lies at 238–242; the sequence is GSGIP. Position 239 (serine 239) interacts with chloride. Positions 241–248 form an intramembrane region, helical; the sequence is IPEIKTIL. 2 helical membrane-spanning segments follow: residues 258–276 and 282–301; these read GKWT…VASG and EGPL…YLFP. Residues 280–284 carry the Selectivity filter part_2 motif; that stretch reads GKEGP. 2 consecutive intramembrane regions (helical) follow at residues 313 to 325 and 329 to 337; these read VLSA…VSVA and PIGGVLFSL. Transmembrane regions (helical) follow at residues 349–367, 391–416, and 423–443; these read LWRS…RSIN, FPFI…AWCR, and FGKY…VIAF. Residues asparagine 451 and asparagine 479 are each glycosylated (N-linked (GlcNAc...) asparagine). 2 helical membrane-spanning segments follow: residues 500–520 and 525–544; these read IWQL…TFGI and GLFI…VGIA. Positions 525–529 match the Selectivity filter part_3 motif; the sequence is GLFIP. Phenylalanine 527 contributes to the chloride binding site. 2 intramembrane regions (helical) span residues 572-586 and 590-601; these read GLYA…LGGV and TVSLVVIVFELT. The segment at residues 602-605 is an intramembrane region (note=Loop between two helices); it reads GGLE. A helical membrane pass occupies residues 606-624; it reads YIVPLMAAVMTSKWVGDAF. Topologically, residues 625 to 818 are cytoplasmic; it reads GREGIYEAHI…NQDPASIMFN (194 aa). Position 630 (tyrosine 630) interacts with chloride. CBS domains follow at residues 658-722 and 755-812; these read MRPR…ARKK and LDMS…NQDP. Residues 689–691 and 796–799 each bind ATP; these read YNG and TKKD.

The protein belongs to the chloride channel (TC 2.A.49) family. ClC-3/CLCN3 subfamily. Monomer and homodimer. Forms heterodimers with CLCN4. Post-translationally, N-glycosylated. Abundant in brain, especially in the olfactory bulb, hippocampus, and cerebellum. A moderate expression is seen in the lung, kidney and adrenal gland.

The protein localises to the lysosome membrane. It localises to the late endosome membrane. It is found in the cell membrane. Its subcellular location is the early endosome membrane. Strongly outwardly rectifying, electrogenic H(+)/Cl(-)exchanger which mediates the exchange of chloride ions against protons. The CLC channel family contains both chloride channels and proton-coupled anion transporters that exchange chloride or another anion for protons. The presence of conserved gating glutamate residues is typical for family members that function as antiporters. Functionally, strongly outwardly rectifying, electrogenic H(+)/Cl(-)exchanger which mediates the exchange of chloride ions against protons. May play an important role in neuronal cell function through regulation of membrane excitability by protein kinase C. It could help neuronal cells to establish short-term memory. The protein is H(+)/Cl(-) exchange transporter 3 (Clcn3) of Rattus norvegicus (Rat).